The primary structure comprises 256 residues: Hydroxyacylglutathione hydrolase (256 aa).

Residues His-57, His-59, Asp-61, His-62, His-115, Asp-134, and His-172 each contribute to the Zn(2+) site.

Belongs to the metallo-beta-lactamase superfamily. Glyoxalase II family. In terms of assembly, monomer. The cofactor is Zn(2+).

The catalysed reaction is an S-(2-hydroxyacyl)glutathione + H2O = a 2-hydroxy carboxylate + glutathione + H(+). The protein operates within secondary metabolite metabolism; methylglyoxal degradation; (R)-lactate from methylglyoxal: step 2/2. Its function is as follows. Thiolesterase that catalyzes the hydrolysis of S-D-lactoyl-glutathione to form glutathione and D-lactic acid. The chain is Hydroxyacylglutathione hydrolase from Jannaschia sp. (strain CCS1).